Consider the following 375-residue polypeptide: uncharacterized protein (375 aa).

The 225-residue stretch at 78-302 (KKIEITSTIH…IFPNIRITSP (225 aa)) folds into the Radical SAM core domain. The [4Fe-4S] cluster site is built by Cys92, Cys98, and Cys101.

Requires [4Fe-4S] cluster as cofactor.

This is an uncharacterized protein from Methanocaldococcus jannaschii (strain ATCC 43067 / DSM 2661 / JAL-1 / JCM 10045 / NBRC 100440) (Methanococcus jannaschii).